The primary structure comprises 108 residues: Ig kappa chain V region 120 (108 aa).

The segment at 1–23 (AFELTQTPSSVEAAVGGTVTIKC) is framework-1. The interval 24–34 (QSSQSIGTYLA) is complementarity-determining-1. The framework-2 stretch occupies residues 35 to 49 (WYZZKPGQPPKLLIY). The complementarity-determining-2 stretch occupies residues 50 to 56 (RASTLAS). The framework-3 stretch occupies residues 57–88 (GVSSRFKGSGSGTEFTLTISGVECADAATYYC). Positions 89 to 97 (QGTYYZSAS) are complementarity-determining-3. The tract at residues 98–107 (FGGGTEVVVK) is framework-4.

The sequence is that of Ig kappa chain V region 120 from Oryctolagus cuniculus (Rabbit).